The primary structure comprises 605 residues: Replication and transcription activator (605 aa).

Disordered stretches follow at residues 307-381 and 447-501; these read SLPS…EPEQ and RIRP…TPEA. A compositionally biased stretch (low complexity) spans 321 to 338; that stretch reads SADCGDSSSSSSDSGNSD. Positions 341–353 are enriched in basic and acidic residues; that stretch reads QSEREEARAEAPR. Basic residues predominate over residues 355–364; it reads RAPKSRRTSR.

The protein belongs to the herpesviridae Rta family. As to quaternary structure, interacts with human ATF7IP protein, leading to promote and regulate host genes in virus-infected cells. Interacts with RNA polymerase III complex; this interaction downregulates small RNA transcription and 5'-pppRNA production.

It localises to the host nucleus. The protein resides in the virion tegument. Functionally, immediate-early transcription factor that controls the initiation of viral lytic gene expression and lytic reactivation from latency. Triggers lytic replication, and initiates a cellular senescence program in epithelial cells. Up-regulates human DCR3/TNFRSF6B by directly binding to its receptor. Globally induces a proteasome-dependent loss of SUMOylated proteins in the host cell and the loss of promeylocytic leukemia nuclear bodies. Improves the stability of the triplex capsid protein TRX1 by reducing the ubiquitination level of the latter. Mediates evasion of inflammasome activation and antiviral responses (T- and NK cell activation) during EBV early lytic infection. The chain is Replication and transcription activator from Epstein-Barr virus (strain GD1) (HHV-4).